Here is a 148-residue protein sequence, read N- to C-terminus: RxLR effector protein SFI7 (148 aa).

Positions 1–22 are cleaved as a signal peptide; sequence MRAYFVLLVAATAILTYGGATA. N-linked (GlcNAc...) asparagine glycosylation occurs at N32. The RxLR-dEER signature appears at 44–58; the sequence is RSLRVAPSGGNGEER.

The protein belongs to the RxLR effector family.

It is found in the secreted. Its subcellular location is the host cytoplasm. It localises to the host cell membrane. Its function is as follows. Effector that suppresses flg22-induced post-translational MAP kinase activation in tomato but not in Arabidopsis. The perception of highly conserved pathogen- or microbe-associated molecular patterns (PAMPs/MAMPs), such as flg22, triggers converging signaling pathways recruiting MAP kinase cascades and inducing transcriptional re-programming, yielding a generic antimicrobial response. Also partially attenuates INF1-triggered cell death. In Phytophthora infestans (strain T30-4) (Potato late blight agent), this protein is RxLR effector protein SFI7.